Here is a 281-residue protein sequence, read N- to C-terminus: NADPH-dependent 7-cyano-7-deazaguanine reductase (281 aa).

Residue 87-89 (IES) coordinates substrate. An NADPH-binding site is contributed by 89-90 (SK). Cys-188 acts as the Thioimide intermediate in catalysis. The active-site Proton donor is Asp-195. Residue 227 to 228 (HE) participates in substrate binding. 256 to 257 (RG) serves as a coordination point for NADPH. The disordered stretch occupies residues 261-281 (INPYRSTEQAKPDHNHRMARQ). Residues 268 to 281 (EQAKPDHNHRMARQ) are compositionally biased toward basic and acidic residues.

It belongs to the GTP cyclohydrolase I family. QueF type 2 subfamily. As to quaternary structure, homodimer.

Its subcellular location is the cytoplasm. It carries out the reaction 7-aminomethyl-7-carbaguanine + 2 NADP(+) = 7-cyano-7-deazaguanine + 2 NADPH + 3 H(+). The protein operates within tRNA modification; tRNA-queuosine biosynthesis. Its function is as follows. Catalyzes the NADPH-dependent reduction of 7-cyano-7-deazaguanine (preQ0) to 7-aminomethyl-7-deazaguanine (preQ1). In Vibrio vulnificus (strain CMCP6), this protein is NADPH-dependent 7-cyano-7-deazaguanine reductase.